A 521-amino-acid polypeptide reads, in one-letter code: Bifunctional purine biosynthesis protein PurH (521 aa).

The MGS-like domain occupies 1–147; sequence MAKITRALIS…KNNADVTVLV (147 aa).

Belongs to the PurH family.

The enzyme catalyses (6R)-10-formyltetrahydrofolate + 5-amino-1-(5-phospho-beta-D-ribosyl)imidazole-4-carboxamide = 5-formamido-1-(5-phospho-D-ribosyl)imidazole-4-carboxamide + (6S)-5,6,7,8-tetrahydrofolate. It carries out the reaction IMP + H2O = 5-formamido-1-(5-phospho-D-ribosyl)imidazole-4-carboxamide. It functions in the pathway purine metabolism; IMP biosynthesis via de novo pathway; 5-formamido-1-(5-phospho-D-ribosyl)imidazole-4-carboxamide from 5-amino-1-(5-phospho-D-ribosyl)imidazole-4-carboxamide (10-formyl THF route): step 1/1. The protein operates within purine metabolism; IMP biosynthesis via de novo pathway; IMP from 5-formamido-1-(5-phospho-D-ribosyl)imidazole-4-carboxamide: step 1/1. The protein is Bifunctional purine biosynthesis protein PurH of Geobacter sulfurreducens (strain ATCC 51573 / DSM 12127 / PCA).